The following is a 198-amino-acid chain: MAKKKQIGRRVEGWKAKSWYKVYVPEAFGSTPIGETIAADSANLVGRVMSTTLGEIAQDFAKQHIKMKFKISRVAGDAAYTEFIGHELTKDYLRSLVKRRTSRIDSHIMGSTKDGKRIHLTVTCYTLIGANSSQIHAIRNVISAQMATFVAQNDWATVVDGIVTGSISRDMLAQVKGIFPIRRIEVIKSKIESKVIIA.

This sequence belongs to the eukaryotic ribosomal protein eS1 family.

The sequence is that of Small ribosomal subunit protein eS1 from Methanosphaerula palustris (strain ATCC BAA-1556 / DSM 19958 / E1-9c).